Reading from the N-terminus, the 131-residue chain is Jacalin-related lectin 15 (131 aa).

The 126-residue stretch at 1–126 folds into the Jacalin-type lectin domain; that stretch reads MSTPSGSNPL…LTSLGAYFAP (126 aa).

The protein belongs to the jacalin lectin family. Expressed in the vascular and surrounding tissues in cotyledons. Detected in root apical meristems.

This Arabidopsis thaliana (Mouse-ear cress) protein is Jacalin-related lectin 15 (JAL15).